A 306-amino-acid polypeptide reads, in one-letter code: Phosphatidylserine decarboxylase proenzyme (306 aa).

Active-site charge relay system; for autoendoproteolytic cleavage activity residues include D98, H155, and S259. S259 acts as the Schiff-base intermediate with substrate; via pyruvic acid; for decarboxylase activity in catalysis. S259 is modified (pyruvic acid (Ser); by autocatalysis).

It belongs to the phosphatidylserine decarboxylase family. PSD-B subfamily. Prokaryotic type I sub-subfamily. In terms of assembly, heterodimer of a large membrane-associated beta subunit and a small pyruvoyl-containing alpha subunit. It depends on pyruvate as a cofactor. Is synthesized initially as an inactive proenzyme. Formation of the active enzyme involves a self-maturation process in which the active site pyruvoyl group is generated from an internal serine residue via an autocatalytic post-translational modification. Two non-identical subunits are generated from the proenzyme in this reaction, and the pyruvate is formed at the N-terminus of the alpha chain, which is derived from the carboxyl end of the proenzyme. The autoendoproteolytic cleavage occurs by a canonical serine protease mechanism, in which the side chain hydroxyl group of the serine supplies its oxygen atom to form the C-terminus of the beta chain, while the remainder of the serine residue undergoes an oxidative deamination to produce ammonia and the pyruvoyl prosthetic group on the alpha chain. During this reaction, the Ser that is part of the protease active site of the proenzyme becomes the pyruvoyl prosthetic group, which constitutes an essential element of the active site of the mature decarboxylase.

The protein resides in the cell membrane. It catalyses the reaction a 1,2-diacyl-sn-glycero-3-phospho-L-serine + H(+) = a 1,2-diacyl-sn-glycero-3-phosphoethanolamine + CO2. It functions in the pathway phospholipid metabolism; phosphatidylethanolamine biosynthesis; phosphatidylethanolamine from CDP-diacylglycerol: step 2/2. Its function is as follows. Catalyzes the formation of phosphatidylethanolamine (PtdEtn) from phosphatidylserine (PtdSer). This Nitrosococcus oceani (strain ATCC 19707 / BCRC 17464 / JCM 30415 / NCIMB 11848 / C-107) protein is Phosphatidylserine decarboxylase proenzyme.